Here is a 266-residue protein sequence, read N- to C-terminus: Proline-rich protein 23A (266 aa).

A compositionally biased stretch (low complexity) spans 1–18; that stretch reads MGSRPRSPSAFPAPWWGQ. Disordered regions lie at residues 1–47 and 197–266; these read MGSR…SLED and EPCA…LFQE. Residues 227–238 show a composition bias toward pro residues; that stretch reads PSSPLQPLPPSP. The span at 255-266 shows a compositional bias: basic residues; it reads PPCKARRRLFQE.

It belongs to the PRR23 family.

The protein is Proline-rich protein 23A (PRR23A) of Homo sapiens (Human).